A 491-amino-acid polypeptide reads, in one-letter code: Argininosuccinate lyase (491 aa).

This sequence belongs to the lyase 1 family. Argininosuccinate lyase subfamily.

It localises to the cytoplasm. It catalyses the reaction 2-(N(omega)-L-arginino)succinate = fumarate + L-arginine. It functions in the pathway amino-acid biosynthesis; L-arginine biosynthesis; L-arginine from L-ornithine and carbamoyl phosphate: step 3/3. This chain is Argininosuccinate lyase, found in Methanosarcina barkeri (strain Fusaro / DSM 804).